A 293-amino-acid polypeptide reads, in one-letter code: Probable xyloglucan endotransglucosylase/hydrolase protein 5 (293 aa).

The first 21 residues, Met-1 to Gly-21, serve as a signal peptide directing secretion. The region spanning Pro-23 to Tyr-220 is the GH16 domain. The active-site Nucleophile is Glu-106. The active-site Proton donor is the Glu-110. Glu-110 contributes to the xyloglucan binding site. An N-linked (GlcNAc...) asparagine glycan is attached at Asn-114. Xyloglucan-binding positions include Gln-123 to Asn-125, Asn-133 to Glu-135, Asp-199 to Trp-200, and Gly-204. Disulfide bonds link Cys-228–Cys-237 and Cys-274–Cys-287. Residue Arg-279 coordinates xyloglucan.

It belongs to the glycosyl hydrolase 16 family. XTH group 1 subfamily. Post-translationally, contains at least one intrachain disulfide bond essential for its enzymatic activity. As to expression, root specific.

The protein resides in the secreted. Its subcellular location is the cell wall. It localises to the extracellular space. The protein localises to the apoplast. The catalysed reaction is breaks a beta-(1-&gt;4) bond in the backbone of a xyloglucan and transfers the xyloglucanyl segment on to O-4 of the non-reducing terminal glucose residue of an acceptor, which can be a xyloglucan or an oligosaccharide of xyloglucan.. Functionally, catalyzes xyloglucan endohydrolysis (XEH) and/or endotransglycosylation (XET). Cleaves and religates xyloglucan polymers, an essential constituent of the primary cell wall, and thereby participates in cell wall construction of growing tissues. The polypeptide is Probable xyloglucan endotransglucosylase/hydrolase protein 5 (XTH5) (Arabidopsis thaliana (Mouse-ear cress)).